The chain runs to 226 residues: LexA repressor (226 aa).

Positions 42–62 form a DNA-binding region, H-T-H motif; sequence MREIGDAVGLASLSSVTHQLN. Active-site for autocatalytic cleavage activity residues include serine 150 and lysine 187.

The protein belongs to the peptidase S24 family. Homodimer.

It carries out the reaction Hydrolysis of Ala-|-Gly bond in repressor LexA.. In terms of biological role, represses a number of genes involved in the response to DNA damage (SOS response), including recA and lexA. In the presence of single-stranded DNA, RecA interacts with LexA causing an autocatalytic cleavage which disrupts the DNA-binding part of LexA, leading to derepression of the SOS regulon and eventually DNA repair. The sequence is that of LexA repressor from Clavibacter sepedonicus (Clavibacter michiganensis subsp. sepedonicus).